We begin with the raw amino-acid sequence, 192 residues long: Thiosulfate reductase electron transfer subunit PhsB (192 aa).

3 4Fe-4S ferredoxin-type domains span residues 8–36, 55–86, and 87–116; these read YVML…VPEG, THFQ…RDEN, and GIVQ…LNPQ. Positions 17, 20, 23, 27, 64, 67, 72, 76, 96, 99, 102, 106, 123, 126, 139, and 143 each coordinate [4Fe-4S] cluster.

As to quaternary structure, composed of three subunits: PhsA, PhsB and PhsC. The cofactor is [4Fe-4S] cluster.

It is found in the cell inner membrane. Functionally, component of the PhsABC thiosulfate reductase that catalyzes the reduction of thiosulfate to sulfite and hydrogen sulfide, with menaquinol as the sole electron donor. Proton motive force (PMF) is required to drive transmembrane electron transfer within the reductase. The PhsB subunit transfers electrons between PhsC and PhsA. This Salmonella typhi protein is Thiosulfate reductase electron transfer subunit PhsB (phsB).